The primary structure comprises 545 residues: Glucose-6-phosphate isomerase (545 aa).

The active-site Proton donor is the E351. Catalysis depends on residues H382 and K510.

It belongs to the GPI family.

Its subcellular location is the cytoplasm. It carries out the reaction alpha-D-glucose 6-phosphate = beta-D-fructose 6-phosphate. The protein operates within carbohydrate biosynthesis; gluconeogenesis. Its pathway is carbohydrate degradation; glycolysis; D-glyceraldehyde 3-phosphate and glycerone phosphate from D-glucose: step 2/4. In terms of biological role, catalyzes the reversible isomerization of glucose-6-phosphate to fructose-6-phosphate. This is Glucose-6-phosphate isomerase from Helicobacter acinonychis (strain Sheeba).